A 592-amino-acid chain; its full sequence is Potassium-transporting ATPase potassium-binding subunit (592 aa).

Transmembrane regions (helical) follow at residues 7–27 (LQTVLLFVVLLAMVKPLGTFM), 71–91 (VLFNLVIFATLFAMLMLQHLL), 136–156 (GLTVHNFVSAATGIAVAIAVI), 179–199 (LYILVPISLIAALVLVSQGVI), 287–307 (LEILLILLIPFSLTYTFGAMV), 314–334 (WTLLGVMLLILLASFAVLQGV), 411–431 (GLYTMLAFAVIAVFVSGLMIG), 449–469 (SVVTVLAAGVMVLILSGIAMI), 473–493 (AVAAMANPGAHGLSEVLYAFA), 515–535 (ILGALAMIVGRFAPAVAVLAM), and 559–579 (FALWLTLVILIVGALTFFPAL).

This sequence belongs to the KdpA family. As to quaternary structure, the system is composed of three essential subunits: KdpA, KdpB and KdpC.

The protein resides in the cell inner membrane. Part of the high-affinity ATP-driven potassium transport (or Kdp) system, which catalyzes the hydrolysis of ATP coupled with the electrogenic transport of potassium into the cytoplasm. This subunit binds the periplasmic potassium ions and delivers the ions to the membrane domain of KdpB through an intramembrane tunnel. This is Potassium-transporting ATPase potassium-binding subunit from Geobacter sulfurreducens (strain ATCC 51573 / DSM 12127 / PCA).